The following is a 280-amino-acid chain: Large ribosomal subunit protein uL2 (280 aa).

Disordered regions lie at residues 32 to 54 (SLLV…SRHM) and 221 to 280 (RGMA…DSKK). A compositionally biased stretch (polar residues) spans 37–49 (NKSTGGRNNNGRV). Residues 232-242 (MGGGEGKSKSG) show a composition bias toward gly residues. The segment covering 257–280 (KGLKTRKRKKASSKLIVRRRDSKK) has biased composition (basic residues).

This sequence belongs to the universal ribosomal protein uL2 family. Part of the 50S ribosomal subunit. Forms a bridge to the 30S subunit in the 70S ribosome.

One of the primary rRNA binding proteins. Required for association of the 30S and 50S subunits to form the 70S ribosome, for tRNA binding and peptide bond formation. It has been suggested to have peptidyltransferase activity; this is somewhat controversial. Makes several contacts with the 16S rRNA in the 70S ribosome. This chain is Large ribosomal subunit protein uL2, found in Chloroherpeton thalassium (strain ATCC 35110 / GB-78).